Consider the following 425-residue polypeptide: Riboflavin biosynthesis protein RibBA (425 aa).

The tract at residues 1–204 is DHBP synthase; sequence MTRLDSVERA…IADLIEWRRK (204 aa). D-ribulose 5-phosphate is bound by residues 28–29, Asp33, 141–145, and Glu165; these read RE and RPGHT. Residue Glu29 coordinates Mg(2+). A Mg(2+)-binding site is contributed by His144. Positions 205 to 425 are GTP cyclohydrolase II; sequence HEKHIERIAE…HLPGEFGGAL (221 aa). Residue 259–263 participates in GTP binding; the sequence is RVHSE. Zn(2+)-binding residues include Cys264, Cys275, and Cys277. GTP is bound by residues Gln280, 303–305, and Thr325; that span reads EGR. Asp337 acts as the Proton acceptor; for GTP cyclohydrolase activity in catalysis. Arg339 (nucleophile; for GTP cyclohydrolase activity) is an active-site residue. GTP contacts are provided by Thr360 and Lys365.

The protein in the N-terminal section; belongs to the DHBP synthase family. It in the C-terminal section; belongs to the GTP cyclohydrolase II family. Requires Mg(2+) as cofactor. The cofactor is Mn(2+). It depends on Zn(2+) as a cofactor.

The enzyme catalyses D-ribulose 5-phosphate = (2S)-2-hydroxy-3-oxobutyl phosphate + formate + H(+). It catalyses the reaction GTP + 4 H2O = 2,5-diamino-6-hydroxy-4-(5-phosphoribosylamino)-pyrimidine + formate + 2 phosphate + 3 H(+). It functions in the pathway cofactor biosynthesis; riboflavin biosynthesis; 2-hydroxy-3-oxobutyl phosphate from D-ribulose 5-phosphate: step 1/1. Its pathway is cofactor biosynthesis; riboflavin biosynthesis; 5-amino-6-(D-ribitylamino)uracil from GTP: step 1/4. In terms of biological role, catalyzes the conversion of D-ribulose 5-phosphate to formate and 3,4-dihydroxy-2-butanone 4-phosphate. Functionally, catalyzes the conversion of GTP to 2,5-diamino-6-ribosylamino-4(3H)-pyrimidinone 5'-phosphate (DARP), formate and pyrophosphate. The polypeptide is Riboflavin biosynthesis protein RibBA (Mycobacterium avium (strain 104)).